The chain runs to 469 residues: Cysteine--tRNA ligase (469 aa).

Position 33 (C33) interacts with Zn(2+). Residues 35–45 carry the 'HIGH' region motif; sequence ATVQGLPHIGH. C211, H236, and E240 together coordinate Zn(2+). The 'KMSKS' region signature appears at 267 to 271; it reads KMSKS. K270 provides a ligand contact to ATP.

The protein belongs to the class-I aminoacyl-tRNA synthetase family. As to quaternary structure, monomer. It depends on Zn(2+) as a cofactor.

The protein resides in the cytoplasm. The enzyme catalyses tRNA(Cys) + L-cysteine + ATP = L-cysteinyl-tRNA(Cys) + AMP + diphosphate. The protein is Cysteine--tRNA ligase (cysS) of Mycobacterium tuberculosis (strain CDC 1551 / Oshkosh).